Consider the following 392-residue polypeptide: Galactokinase (392 aa).

33 to 36 (EHTD) is a substrate binding site. ATP-binding positions include Ser-67 and 129-135 (GSGLSSS). Mg(2+) contacts are provided by Ser-135 and Glu-167. The active-site Proton acceptor is Asp-179. Tyr-229 is a binding site for substrate.

It belongs to the GHMP kinase family. GalK subfamily.

The protein localises to the cytoplasm. It catalyses the reaction alpha-D-galactose + ATP = alpha-D-galactose 1-phosphate + ADP + H(+). It participates in carbohydrate metabolism; galactose metabolism. Its function is as follows. Catalyzes the transfer of the gamma-phosphate of ATP to D-galactose to form alpha-D-galactose-1-phosphate (Gal-1-P). The chain is Galactokinase from Limosilactobacillus reuteri (strain DSM 20016) (Lactobacillus reuteri).